The primary structure comprises 101 residues: Replication restart protein PriB (101 aa).

The SSB domain occupies 1–101 (MTTNNLVLAG…LHAENVELKT (101 aa)).

It belongs to the PriB family. As to quaternary structure, homodimer. Interacts with PriA and DnaT. Component of the replication restart primosome. Primosome assembly occurs via a 'hand-off' mechanism. PriA binds to replication forks, subsequently PriB then DnaT bind; DnaT then displaces ssDNA to generate the helicase loading substrate.

Functionally, involved in the restart of stalled replication forks, which reloads the replicative helicase on sites other than the origin of replication; the PriA-PriB pathway is the major replication restart pathway. During primosome assembly it facilitates complex formation between PriA and DnaT on DNA; stabilizes PriA on DNA. Stimulates the DNA unwinding activity of PriA helicase. This is Replication restart protein PriB from Shewanella pealeana (strain ATCC 700345 / ANG-SQ1).